Reading from the N-terminus, the 1013-residue chain is Tolloid-like protein 1 (1013 aa).

The signal sequence occupies residues 1–30; the sequence is MGLGTLSPRMLVWLVASGIVFYGELWVCAG. A propeptide spanning residues 31-147 is cleaved from the precursor; the sequence is LDYDYTFDGN…GQNEKNRVPR (117 aa). Residues 148–347 enclose the Peptidase M12A domain; the sequence is AATSRTERIW…AQARKLYRCP (200 aa). Asn-169 carries an N-linked (GlcNAc...) asparagine glycan. Disulfide bonds link Cys-190-Cys-346, Cys-210-Cys-232, Cys-212-Cys-213, and Cys-349-Cys-375. His-240 lines the Zn(2+) pocket. The active site involves Glu-241. Zn(2+)-binding residues include His-244 and His-250. CUB domains follow at residues 349–461 and 462–574; these read CGET…YEAI and CGGE…FFKE. Residues Asn-359 and Asn-390 are each glycosylated (N-linked (GlcNAc...) asparagine). Disulfide bonds link Cys-402-Cys-424, Cys-462-Cys-488, Cys-515-Cys-537, Cys-578-Cys-590, Cys-586-Cys-599, Cys-601-Cys-614, Cys-618-Cys-644, Cys-671-Cys-693, Cys-734-Cys-745, Cys-741-Cys-754, Cys-756-Cys-769, Cys-774-Cys-800, Cys-827-Cys-849, Cys-887-Cys-917, and Cys-944-Cys-966. The EGF-like 1; calcium-binding domain maps to 574–615; sequence EEDECAKPDRGGCEQRCLNTLGSYQCACEPGYELGPDRRSCE. The 113-residue stretch at 618–730 folds into the CUB 3 domain; that stretch reads CGGLLTKLNG…KGFKAHFFSD (113 aa). Asn-626 is a glycosylation site (N-linked (GlcNAc...) asparagine). In terms of domain architecture, EGF-like 2; calcium-binding spans 730–770; that stretch reads DKDECSKDNGGCQHECVNTMGSYMCQCRNGFVLHDNKHDCK. 2 consecutive CUB domains span residues 774–886 and 887–1003; these read CEQK…HSTE and CGGR…YKSI.

The cofactor is Zn(2+).

It is found in the secreted. Protease which processes procollagen C-propeptides, such as chordin, pro-biglycan and pro-lysyl oxidase. Required for the embryonic development. Predominant protease, which in the development, influences dorsal-ventral patterning and skeletogenesis. This chain is Tolloid-like protein 1 (TLL1), found in Homo sapiens (Human).